Here is a 495-residue protein sequence, read N- to C-terminus: Histidine--tRNA ligase (495 aa).

Belongs to the class-II aminoacyl-tRNA synthetase family. In terms of assembly, homodimer.

It localises to the cytoplasm. The enzyme catalyses tRNA(His) + L-histidine + ATP = L-histidyl-tRNA(His) + AMP + diphosphate + H(+). The chain is Histidine--tRNA ligase from Bartonella henselae (strain ATCC 49882 / DSM 28221 / CCUG 30454 / Houston 1) (Rochalimaea henselae).